We begin with the raw amino-acid sequence, 624 residues long: Chaperone protein HtpG (624 aa).

The segment at 1-336 is a; substrate-binding; the sequence is MKGQETRGFQ…SNDLPLNVSR (336 aa). The interval 337–552 is b; it reads EILQDSSVTR…ADEMSTQMAK (216 aa). The interval 553–624 is c; that stretch reads LFAAAGQAAP…IRRMNQLLAS (72 aa).

It belongs to the heat shock protein 90 family. As to quaternary structure, homodimer.

The protein localises to the cytoplasm. In terms of biological role, molecular chaperone. Has ATPase activity. The sequence is that of Chaperone protein HtpG from Klebsiella pneumoniae subsp. pneumoniae (strain ATCC 700721 / MGH 78578).